A 300-amino-acid polypeptide reads, in one-letter code: Probable endonuclease 4 (300 aa).

The Zn(2+) site is built by His69, His110, Glu145, Asp179, His182, His214, Asp227, His229, and Glu259.

This sequence belongs to the AP endonuclease 2 family. It depends on Zn(2+) as a cofactor.

It catalyses the reaction Endonucleolytic cleavage to 5'-phosphooligonucleotide end-products.. Its function is as follows. Endonuclease IV plays a role in DNA repair. It cleaves phosphodiester bonds at apurinic or apyrimidinic (AP) sites, generating a 3'-hydroxyl group and a 5'-terminal sugar phosphate. The sequence is that of Probable endonuclease 4 from Lachnoclostridium phytofermentans (strain ATCC 700394 / DSM 18823 / ISDg) (Clostridium phytofermentans).